The chain runs to 543 residues: Carotenoid 9,10(9',10')-cleavage dioxygenase 1 (543 aa).

Positions 224, 272, 338, and 528 each coordinate Fe cation.

This sequence belongs to the carotenoid oxygenase family. Homodimer. Fe(2+) is required as a cofactor.

It catalyses the reaction all-trans-zeaxanthin + 2 O2 = 4,9-dimethyldodeca-2,4,6,8,10-pentaenedial + 2 (3R)-hydroxy-beta-ionone. Functionally, cleaves a variety of carotenoids at the 9-10 and 9'-10' double bonds. Probably not involved in abscisic acid biosynthesis. This Phaseolus vulgaris (Kidney bean) protein is Carotenoid 9,10(9',10')-cleavage dioxygenase 1 (CCD1).